The sequence spans 229 residues: HTH-type transcriptional regulator HbdR (229 aa).

The HTH tetR-type domain occupies 20–80; it reads EERRHQIISA…LTLKNVLDTY (61 aa). The segment at residues 43–62 is a DNA-binding region (H-T-H motif); the sequence is TILQIAREAKVSTGLIYQYF.

As to quaternary structure, homodimer in solution.

With respect to regulation, activity is regulated by the effector molecules 3-hydroxybenzoyl-CoA and benzoyl-CoA, which bind to HbdR, alleviating its repression on the three target promoters and inducing the expression of the hbd genes. In terms of biological role, transcriptional regulator that controls the expression of the hbd cluster, which contains three catabolic operons and is responsible for the anaerobic degradation of 3-hydroxybenzoate. HbdR suppresses the activity of the three catabolic promoters (PhbdN, PhbdE and PhbdH) by binding to a conserved palindromic operator box. In addition, it slightly increases activity of its own promoter (PhbdR). The HbdR-mediated repression of hbd genes may play a crucial biological role in maintaining requisite hydroxybenzoate levels in the cell. The polypeptide is HTH-type transcriptional regulator HbdR (Aromatoleum sp. (strain CIB) (Azoarcus sp. (strain CIB))).